The sequence spans 616 residues: Secretogranin-2 (616 aa).

Positions 1–27 (MAEAKTHWLGASLSLILLIFLLATAEA) are cleaved as a signal peptide. The propeptide occupies 28 to 30 (ASF). Disordered regions lie at residues 68–104 (QAHK…RDSL) and 120–146 (AENE…PMDM). The segment covering 92–104 (ENSDLPESSRDSL) has biased composition (basic and acidic residues). The span at 122-140 (NEPQSSLKENKPYTLNSEK) shows a compositional bias: polar residues. The residue at position 150 (Tyr150) is a Sulfotyrosine. Phosphoserine occurs at positions 173, 267, 431, 531, 554, and 555. Positions 255 to 283 (KIESQTQEEVRDSKENIEKNEQINDEMKR) are enriched in basic and acidic residues. A disordered region spans residues 255 to 290 (KIESQTQEEVRDSKENIEKNEQINDEMKRSGQMGLQ). The segment covering 548-560 (ERLNQHSSQETDK) has biased composition (basic and acidic residues). The tract at residues 548–582 (ERLNQHSSQETDKLALVSKRLPVATPKSDDAPNRQ) is disordered.

It belongs to the chromogranin/secretogranin protein family. As to quaternary structure, interacts with Secretogranin III/SCG3.

It is found in the secreted. Functionally, neuroendocrine protein of the granin family that regulates the biogenesis of secretory granules. This chain is Secretogranin-2 (SCG2), found in Sus scrofa (Pig).